The chain runs to 359 residues: Heme A synthase (359 aa).

Transmembrane regions (helical) follow at residues 8-28 (IMSIWLIVSTLLLLLMIVVGG), 94-114 (LLGRITGIIIIIPFLIFCYLK), 124-144 (LLLITCLVVIQGFMGWYMVKS), 159-179 (GHLLLAVIIYHQLIAELLIII), and 215-235 (IIIFLLYTQIMFGALVAGLDA). Residue His-274 coordinates heme. A run of 3 helical transmembrane segments spans residues 276–296 (WFGILISGLIICYAIWLIILN), 303–323 (MGMVAACLVLVQVTTGIITLL), and 328–348 (ILAALTHQVGAILILTTFLFI). His-334 contacts heme.

Belongs to the COX15/CtaA family. Type 2 subfamily. Interacts with CtaB. It depends on heme b as a cofactor.

The protein localises to the cell membrane. The catalysed reaction is Fe(II)-heme o + 2 A + H2O = Fe(II)-heme a + 2 AH2. It functions in the pathway porphyrin-containing compound metabolism; heme A biosynthesis; heme A from heme O: step 1/1. Catalyzes the conversion of heme O to heme A by two successive hydroxylations of the methyl group at C8. The first hydroxylation forms heme I, the second hydroxylation results in an unstable dihydroxymethyl group, which spontaneously dehydrates, resulting in the formyl group of heme A. This is Heme A synthase from Orientia tsutsugamushi (strain Boryong) (Rickettsia tsutsugamushi).